The chain runs to 134 residues: Pre-histone-like nucleoprotein (134 aa).

A propeptide spanning residues A2–G23 is cleaved from the precursor. The disordered stretch occupies residues R40–P62. Residues K125–Q134 carry the Nuclear localization signal motif.

It belongs to the adenoviridae histone-like nucleoprotein family. Interacts with the core-capsid bridging protein; this interaction bridges the virus core to the capsid. Interacts with host NPM1; this interaction might play a role in placing the pre-histone-like nucleoprotein on the viral DNA or regulating viral gene expression. Interacts with host HMGB1; this interaction inhibits host immune response. Cleaved near the N-terminus by the viral protease during virion maturation to form the mature protein.

The protein resides in the virion. It is found in the host nucleus. Its subcellular location is the host nucleolus. Its function is as follows. Plays a role in the inhibition of host immune response within the nucleus. Interacts with cellular nucleosomes and immobilizes the host immune danger signal HMGB1 on chromatin. In turn, prevents HMGB1 release out of the cell and thus decreases inflammation. Also plays a role in the wrapping and condensation of the viral DNA. May also promote viral genome import into the nucleus. The protein is Pre-histone-like nucleoprotein of Canis lupus familiaris (Dog).